The sequence spans 89 residues: Small ribosomal subunit protein bS20 (89 aa).

The interval 1 to 26 (MANSPQAKKRARQNEKNRKHNASLRS) is disordered. Residues 7-22 (AKKRARQNEKNRKHNA) are compositionally biased toward basic residues.

This sequence belongs to the bacterial ribosomal protein bS20 family.

Its function is as follows. Binds directly to 16S ribosomal RNA. This is Small ribosomal subunit protein bS20 from Marinobacter nauticus (strain ATCC 700491 / DSM 11845 / VT8) (Marinobacter aquaeolei).